The primary structure comprises 615 residues: Prickle planar cell polarity protein 3 (615 aa).

Basic residues predominate over residues 1 to 12 (MFARGSRRRRSG). The tract at residues 1 to 26 (MFARGSRRRRSGRAPPEAEDPDRGQP) is disordered. In terms of domain architecture, PET spans 74–182 (SDFQRHSISD…IVRIFPVTIT (109 aa)). LIM zinc-binding domains lie at 184–249 (AICE…CLRP), 250–309 (RCQA…RHAE), and 310–373 (YCDG…SEPT). Disordered stretches follow at residues 396–567 (ASFS…LGER) and 587–615 (TFNSPSLSLPRDSRAGMPRQARDKNCIVA). Residues 405-415 (SETTTKGTSTE) show a composition bias toward polar residues. A phosphoserine mark is found at Ser-475 and Ser-491. Over residues 508–531 (PSRRRHHHHNHHHHHNRHPSRRRH) the composition is skewed to basic residues. The segment covering 537-555 (GSGSDSESCSSSPSSSSSE) has biased composition (low complexity). Positions 606–615 (QARDKNCIVA) are enriched in basic and acidic residues.

This sequence belongs to the prickle / espinas / testin family. In terms of assembly, interacts with VANGL2 via its C-terminus. The VANGL2-dependent membrane recruitment of PRICKLE3 is a prerequisite for its polarization. Interacts with WTIP. WTIP is involved in the recruitment of PRICKLE3 to the basal body. Interacts with MT-ATP8, a component of the mitochondrial complex V. As to expression, widely expressed.

Its subcellular location is the cytoplasm. It localises to the cell membrane. The protein resides in the mitochondrion. In terms of biological role, involved in the planar cell polarity (PCP) pathway that is essential for the polarization of epithelial cells during morphogenetic processes, including gastrulation and neurulation. PCP is maintained by two molecular modules, the global and the core modules, PRICKLE3 being part of the core module. Distinct complexes of the core module segregate to opposite sides of the cell, where they interact with the opposite complex in the neighboring cell at or near the adherents junctions. Involved in the organization of the basal body. Involved in cilia growth and positioning. Required for proper assembly, stability, and function of mitochondrial membrane ATP synthase (mitochondrial complex V). The polypeptide is Prickle planar cell polarity protein 3 (Homo sapiens (Human)).